We begin with the raw amino-acid sequence, 156 residues long: Small ribosomal subunit protein uS7 (156 aa).

The protein belongs to the universal ribosomal protein uS7 family. Part of the 30S ribosomal subunit. Contacts proteins S9 and S11.

Functionally, one of the primary rRNA binding proteins, it binds directly to 16S rRNA where it nucleates assembly of the head domain of the 30S subunit. Is located at the subunit interface close to the decoding center, probably blocks exit of the E-site tRNA. The protein is Small ribosomal subunit protein uS7 of Crocosphaera subtropica (strain ATCC 51142 / BH68) (Cyanothece sp. (strain ATCC 51142)).